A 194-amino-acid chain; its full sequence is Methylated-DNA--protein-cysteine methyltransferase (194 aa).

Positions 125 and 139 each coordinate DNA. C156 (nucleophile; methyl group acceptor) is an active-site residue. Residue S162 coordinates DNA.

Belongs to the MGMT family.

It localises to the nucleus. The catalysed reaction is a 6-O-methyl-2'-deoxyguanosine in DNA + L-cysteinyl-[protein] = S-methyl-L-cysteinyl-[protein] + a 2'-deoxyguanosine in DNA. It carries out the reaction a 4-O-methyl-thymidine in DNA + L-cysteinyl-[protein] = a thymidine in DNA + S-methyl-L-cysteinyl-[protein]. Its function is as follows. Involved in the cellular defense against the biological effects of O6-methylguanine (O6-MeG) and O4-methylthymine (O4-MeT) in DNA. Repairs the methylated nucleobase in DNA by stoichiometrically transferring the methyl group to a cysteine residue in the enzyme. This is a suicide reaction: the enzyme is irreversibly inactivated. The chain is Methylated-DNA--protein-cysteine methyltransferase (MGT1) from Scheffersomyces stipitis (strain ATCC 58785 / CBS 6054 / NBRC 10063 / NRRL Y-11545) (Yeast).